The chain runs to 420 residues: Putative zinc metalloprotease Lmo1318 (420 aa).

A Zn(2+)-binding site is contributed by histidine 18. Residue glutamate 19 is part of the active site. Zn(2+) is bound at residue histidine 22. The next 4 helical transmembrane spans lie at 172–194, 304–326, 347–369, and 393–412; these read TIFA…LAFV, NWIV…LDML, VLNW…LPAL, and GIIH…LVTW. One can recognise a PDZ domain in the interval 176-267; sequence GPLFNFILAI…DGKTQDIDVK (92 aa).

Belongs to the peptidase M50B family. Requires Zn(2+) as cofactor.

It is found in the cell membrane. This is Putative zinc metalloprotease Lmo1318 from Listeria monocytogenes serovar 1/2a (strain ATCC BAA-679 / EGD-e).